Here is a 516-residue protein sequence, read N- to C-terminus: Monocarboxylate transporter 12 (516 aa).

Residues 1 to 50 (MPSGSHWTANSSKIITWLLEQPGKEEKRKTMAKVNRARSTSPPDGGWGWM) are Cytoplasmic-facing. The next 12 helical transmembrane spans lie at 51–73 (IVAG…SIFF), 88–108 (AWIH…GSVV), 116–136 (VGIM…SFAT), 145–165 (LGVL…AMVG), 178–198 (IAMS…QLLI), 207–227 (LLIL…MRPI), 283–303 (FVVL…LFVY), 319–339 (AFLM…FGWL), 350–370 (YVCY…LPML), 377–397 (VPFS…IPVV), 410–430 (ALGV…PIAG), and 440–460 (TAAF…LGFA). Residues 461–516 (RLIKRMRKTQLQFIAKESDPKLQLWTNGSVAYSVARELDQKHGEPVATAVPGYSLT) lie on the Cytoplasmic side of the membrane.

This sequence belongs to the major facilitator superfamily. Monocarboxylate porter (TC 2.A.1.13) family. In terms of assembly, interacts with isoform 2 of BSG; this interaction is required for its localization to the plasma membrane. In terms of tissue distribution, most highly expressed in kidney, followed by retina, lung, heart and testis. Very weakly expressed in brain and liver. Also detected in lens.

It localises to the cell membrane. It is found in the basolateral cell membrane. It catalyses the reaction creatine(in) = creatine(out). The enzyme catalyses guanidinoacetate(in) = guanidinoacetate(out). With respect to regulation, creatine uptake is inhibited by carbonyl cyanide 3-chlorophenylhydrazone (CCCP) and by valinomycin. Its function is as follows. Functions as a transporter for creatine and as well for its precursor guanidinoacetate. Transport of creatine and GAA is independent of resting membrane potential and extracellular Na(+), Cl(-), or pH. Contributes to the process of creatine biosynthesis and distribution. This chain is Monocarboxylate transporter 12, found in Homo sapiens (Human).